The sequence spans 413 residues: Putative acid phosphatase 11 (413 aa).

Residue His35 is the Nucleophile of the active site. The active-site Proton donor is the Asp315. A disulfide bond links Cys381 and Cys387.

Belongs to the histidine acid phosphatase family.

It catalyses the reaction a phosphate monoester + H2O = an alcohol + phosphate. The polypeptide is Putative acid phosphatase 11 (pho-11) (Caenorhabditis elegans).